We begin with the raw amino-acid sequence, 160 residues long: Cyanate hydratase (160 aa).

Residues R100, E103, and S126 contribute to the active site.

It belongs to the cyanase family.

The enzyme catalyses cyanate + hydrogencarbonate + 3 H(+) = NH4(+) + 2 CO2. Functionally, catalyzes the reaction of cyanate with bicarbonate to produce ammonia and carbon dioxide. The sequence is that of Cyanate hydratase from Neosartorya fischeri (strain ATCC 1020 / DSM 3700 / CBS 544.65 / FGSC A1164 / JCM 1740 / NRRL 181 / WB 181) (Aspergillus fischerianus).